Reading from the N-terminus, the 966-residue chain is RNA polymerase-associated protein RapA (966 aa).

One can recognise a Helicase ATP-binding domain in the interval 163–337; the sequence is EVGQRLHPRV…FARLKLLDAD (175 aa). Residue 176 to 183 coordinates ATP; sequence DEVGLGKT. Positions 283–286 match the DEAH box motif; that stretch reads DEAH. One can recognise a Helicase C-terminal domain in the interval 488 to 642; it reads RVEWLITFLK…ICPMGMALFE (155 aa).

The protein belongs to the SNF2/RAD54 helicase family. RapA subfamily. Interacts with the RNAP. Has a higher affinity for the core RNAP than for the holoenzyme. Its ATPase activity is stimulated by binding to RNAP.

Its function is as follows. Transcription regulator that activates transcription by stimulating RNA polymerase (RNAP) recycling in case of stress conditions such as supercoiled DNA or high salt concentrations. Probably acts by releasing the RNAP, when it is trapped or immobilized on tightly supercoiled DNA. Does not activate transcription on linear DNA. Probably not involved in DNA repair. The protein is RNA polymerase-associated protein RapA of Actinobacillus succinogenes (strain ATCC 55618 / DSM 22257 / CCUG 43843 / 130Z).